A 218-amino-acid chain; its full sequence is Copper acquisition factor BIM1 (218 aa).

The signal sequence occupies residues 1–19; sequence MFALKSILVTSLITSTALA. Cu(2+) contacts are provided by H20 and H65. N87, N91, and N124 each carry an N-linked (GlcNAc...) asparagine glycan. Cu(2+) is bound at residue D138. N-linked (GlcNAc...) asparagine glycans are attached at residues N158 and N170. The disordered stretch occupies residues 160 to 194; it reads TCTNDASKASNATSTSSGSATATSAAATSSSSGTS. The span at 165–194 shows a compositional bias: low complexity; it reads ASKASNATSTSSGSATATSAAATSSSSGTS. S190 is lipidated: GPI-anchor amidated serine. Positions 191–218 are cleaved as a propeptide — removed in mature form; sequence SGTSGAIKEVVGFGALSLALGIAGLIIL.

This sequence belongs to the X325 family. Interacts with the CUF1-dependent copper transporter CTR1. It depends on Cu(2+) as a cofactor.

The protein localises to the cell membrane. Lytic polysaccharide monooxygenase-like protein that has diverged to biological functions other than polysaccharide degradation since it does not perform oxidative cleavage of polysaccharides. Cell surface-bound protein that functions in the copper-accumulation pathway shared by the CUF1-dependent copper transporter CTR1. Involved in maintaining cell wall integrity during copper deficiency. Binds Cu(2+) with an estimated 1:1 stoichiometry and might serve as an extracellular copper ligand. FRE4 and FRE7 metalloreductases probably function together with CTR1 and BIM1 to liberate the Cu(2+) bound to the BIM1 copper-binding site for subsequent import of Cu(+) into the cell by CTR1, via the reduction of BIM1-bound Cu(2+) to Cu(+) to reduce binding affinity for BIM1 but increase affinity for CTR1. Facilitates copper acquisition in the brain of mammalian hosts and acts as a copper-dependent virulence trait in fungal meningitis. While BIM1 plays a critical role in cryptococcal meningitis, at least in part through its role in copper acquisition, it could play additional roles during copper limitation or as a means to invade and colonize host tissues in the brain, by compromising host carbohydrate integrity via its lytic polysaccharide monooxygenase (LPMO) activity, which has still to be determined. In Cryptococcus neoformans var. grubii serotype A (strain H99 / ATCC 208821 / CBS 10515 / FGSC 9487) (Filobasidiella neoformans var. grubii), this protein is Copper acquisition factor BIM1.